A 154-amino-acid polypeptide reads, in one-letter code: SsrA-binding protein (154 aa).

The protein belongs to the SmpB family.

The protein localises to the cytoplasm. In terms of biological role, required for rescue of stalled ribosomes mediated by trans-translation. Binds to transfer-messenger RNA (tmRNA), required for stable association of tmRNA with ribosomes. tmRNA and SmpB together mimic tRNA shape, replacing the anticodon stem-loop with SmpB. tmRNA is encoded by the ssrA gene; the 2 termini fold to resemble tRNA(Ala) and it encodes a 'tag peptide', a short internal open reading frame. During trans-translation Ala-aminoacylated tmRNA acts like a tRNA, entering the A-site of stalled ribosomes, displacing the stalled mRNA. The ribosome then switches to translate the ORF on the tmRNA; the nascent peptide is terminated with the 'tag peptide' encoded by the tmRNA and targeted for degradation. The ribosome is freed to recommence translation, which seems to be the essential function of trans-translation. The polypeptide is SsrA-binding protein (Streptococcus thermophilus (strain CNRZ 1066)).